The following is a 124-amino-acid chain: Small ribosomal subunit protein uS12 (124 aa).

The residue at position 89 (Asp-89) is a 3-methylthioaspartic acid.

The protein belongs to the universal ribosomal protein uS12 family. In terms of assembly, part of the 30S ribosomal subunit. Contacts proteins S8 and S17. May interact with IF1 in the 30S initiation complex.

Its function is as follows. With S4 and S5 plays an important role in translational accuracy. Functionally, interacts with and stabilizes bases of the 16S rRNA that are involved in tRNA selection in the A site and with the mRNA backbone. Located at the interface of the 30S and 50S subunits, it traverses the body of the 30S subunit contacting proteins on the other side and probably holding the rRNA structure together. The combined cluster of proteins S8, S12 and S17 appears to hold together the shoulder and platform of the 30S subunit. The sequence is that of Small ribosomal subunit protein uS12 from Moorella thermoacetica (strain ATCC 39073 / JCM 9320).